We begin with the raw amino-acid sequence, 461 residues long: MSRQKNQNSKGHGVSKGKEREQRTLIRFKTTLMNTLMDVLRHRPGWVEVKDEGEWDFYWCDVSWLRENFDHTYMDEHVRISHFRNHYELTRKNYMVKNLKRFRKYLERESGKTEAAKCDFFPKTFEMPCEYHLFVEEFRKNPGITWIMKPVARSQGKGIFLFRRLKDIMDWRKGTSGKKPTGVETQPARANMNPSGSHDTRSSDDQKDDLPVENYVAQRYVENPYLIGGRKFDLRVYVLVMSYIPLRAWLYRDGFARFSNTRFTLNSIDDHYVHLTNVAVQKTSPDYHLKKGCKWMLQRFRQYLASKHGPKAVETLFSDMDNIFIKSLQSVQKVIISDKHCFELYGYDILIDQDLKPWLLEVNASPSLTASSQEDYELKTCLLEDTLHVVDMEARLTGKEKRVGGFDLMWNDGPVSREDGPSDLSGMGNFVTNTHLGCVNDRKEQLRQLFRSLQAQRKAPS.

The span at 1–10 (MSRQKNQNSK) shows a compositional bias: polar residues. The segment at 1 to 20 (MSRQKNQNSKGHGVSKGKER) is disordered. Residues 22-402 (QRTLIRFKTT…EARLTGKEKR (381 aa)) enclose the TTL domain. Residues lysine 149 and 155–156 (QG) each bind ATP. Glutamine 155 serves as a coordination point for a protein. The interval 172 to 208 (RKGTSGKKPTGVETQPARANMNPSGSHDTRSSDDQKD) is disordered. Residues 198–208 (HDTRSSDDQKD) show a composition bias toward basic and acidic residues. ATP is bound by residues 218 to 221 (QRYV) and 231 to 233 (KFD). Arginine 257 serves as a coordination point for L-glutamate. 276–277 (TN) contributes to the ATP binding site. Lysine 294 lines the L-glutamate pocket. Mg(2+) is bound by residues aspartate 348, glutamate 361, and asparagine 363. An L-glutamate-binding site is contributed by lysine 379.

This sequence belongs to the tubulin--tyrosine ligase family. It depends on Mg(2+) as a cofactor. In terms of tissue distribution, highly expressed in brain and testis. Expressed in heart, kidney and lung. In the brain, expressed in ependymal cilia, cortex, corpus callosum and striatum. In the testis, specifically expressed in the seminiferous tubules.

Its subcellular location is the cytoplasm. It localises to the cytoskeleton. The protein resides in the cilium basal body. The protein localises to the flagellum axoneme. The enzyme catalyses (L-glutamyl)(n)-gamma-L-glutamyl-L-glutamyl-[protein] + L-glutamate + ATP = (L-glutamyl)(n+1)-gamma-L-glutamyl-L-glutamyl-[protein] + ADP + phosphate + H(+). Probable tubulin polyglutamylase that generates side chains of glutamate on the gamma-carboxyl group of specific glutamate residues within the C-terminal tail of target proteins. Similar to TTLL1, may acquire enzymatic activity only in complex with other proteins as it is most likely lacking domains important for autonomous activity. Mediates tubulin polyglutamylation which induces establishment of microtubule heterogeneity in sperm flagella, thereby playing a role in normal motile flagella axoneme structure and sperm flagella beating pattern. The sequence is that of Probable tubulin polyglutamylase TTLL9 from Mus musculus (Mouse).